A 106-amino-acid polypeptide reads, in one-letter code: Integration host factor subunit alpha (106 aa).

The protein belongs to the bacterial histone-like protein family. Heterodimer of an alpha and a beta chain.

This protein is one of the two subunits of integration host factor, a specific DNA-binding protein that functions in genetic recombination as well as in transcriptional and translational control. This chain is Integration host factor subunit alpha, found in Methylobacterium radiotolerans (strain ATCC 27329 / DSM 1819 / JCM 2831 / NBRC 15690 / NCIMB 10815 / 0-1).